A 199-amino-acid chain; its full sequence is Small heat shock protein hspG4 (199 aa).

The sHSP domain occupies 30–199; the sequence is NKRVDIIPSM…SSNTIKININ (170 aa). A disordered region spans residues 83 to 105; that stretch reads KNQQQQQQQQQLENSNNKENDEP.

The protein belongs to the small heat shock protein (HSP20) family.

This is Small heat shock protein hspG4 (hspG4) from Dictyostelium discoideum (Social amoeba).